Consider the following 44-residue polypeptide: Protein PsbN (44 aa).

A helical membrane pass occupies residues 6-26 (FFFTIFLWCLLLSVTGYSVYV).

Belongs to the PsbN family.

It localises to the plastid. The protein localises to the chloroplast thylakoid membrane. In terms of biological role, may play a role in photosystem I and II biogenesis. The protein is Protein PsbN of Oltmannsiellopsis viridis (Marine flagellate).